We begin with the raw amino-acid sequence, 507 residues long: Maturase K (507 aa).

It belongs to the intron maturase 2 family. MatK subfamily.

The protein localises to the plastid. It localises to the chloroplast. Usually encoded in the trnK tRNA gene intron. Probably assists in splicing its own and other chloroplast group II introns. In Cryptomeria japonica (Japanese cedar), this protein is Maturase K.